The following is a 264-amino-acid chain: Acyl-[acyl-carrier-protein]--UDP-N-acetylglucosamine O-acyltransferase (264 aa).

It belongs to the transferase hexapeptide repeat family. LpxA subfamily. As to quaternary structure, homotrimer.

The protein localises to the cytoplasm. The catalysed reaction is a (3R)-hydroxyacyl-[ACP] + UDP-N-acetyl-alpha-D-glucosamine = a UDP-3-O-[(3R)-3-hydroxyacyl]-N-acetyl-alpha-D-glucosamine + holo-[ACP]. Its pathway is glycolipid biosynthesis; lipid IV(A) biosynthesis; lipid IV(A) from (3R)-3-hydroxytetradecanoyl-[acyl-carrier-protein] and UDP-N-acetyl-alpha-D-glucosamine: step 1/6. Its function is as follows. Involved in the biosynthesis of lipid A, a phosphorylated glycolipid that anchors the lipopolysaccharide to the outer membrane of the cell. The sequence is that of Acyl-[acyl-carrier-protein]--UDP-N-acetylglucosamine O-acyltransferase from Rickettsia canadensis (strain McKiel).